Consider the following 141-residue polypeptide: Large ribosomal subunit protein uL11 (141 aa).

It belongs to the universal ribosomal protein uL11 family. In terms of assembly, part of the ribosomal stalk of the 50S ribosomal subunit. Interacts with L10 and the large rRNA to form the base of the stalk. L10 forms an elongated spine to which L12 dimers bind in a sequential fashion forming a multimeric L10(L12)X complex. Post-translationally, one or more lysine residues are methylated.

Its function is as follows. Forms part of the ribosomal stalk which helps the ribosome interact with GTP-bound translation factors. The polypeptide is Large ribosomal subunit protein uL11 (Agathobacter rectalis (strain ATCC 33656 / DSM 3377 / JCM 17463 / KCTC 5835 / VPI 0990) (Eubacterium rectale)).